A 127-amino-acid chain; its full sequence is Aspartate 1-decarboxylase (127 aa).

Ser25 serves as the catalytic Schiff-base intermediate with substrate; via pyruvic acid. Ser25 carries the post-translational modification Pyruvic acid (Ser). Thr57 provides a ligand contact to substrate. The active-site Proton donor is the Tyr58. Residue Gly73–Ala75 participates in substrate binding.

Belongs to the PanD family. In terms of assembly, heterooctamer of four alpha and four beta subunits. Pyruvate is required as a cofactor. In terms of processing, is synthesized initially as an inactive proenzyme, which is activated by self-cleavage at a specific serine bond to produce a beta-subunit with a hydroxyl group at its C-terminus and an alpha-subunit with a pyruvoyl group at its N-terminus.

The protein localises to the cytoplasm. It carries out the reaction L-aspartate + H(+) = beta-alanine + CO2. Its pathway is cofactor biosynthesis; (R)-pantothenate biosynthesis; beta-alanine from L-aspartate: step 1/1. In terms of biological role, catalyzes the pyruvoyl-dependent decarboxylation of aspartate to produce beta-alanine. The sequence is that of Aspartate 1-decarboxylase from Geobacillus sp. (strain WCH70).